Consider the following 416-residue polypeptide: Major facilitator superfamily domain-containing protein 3 (416 aa).

12 consecutive transmembrane segments (helical) span residues Gly10–Leu30, Val40–Val60, Val68–Pro88, Thr99–Leu119, Gln139–Phe158, Leu170–Leu190, Tyr204–Thr224, Leu252–Leu272, Leu295–Leu315, Ala324–Phe344, Phe365–Ala385, and Leu392–Pro412.

This sequence belongs to the major facilitator superfamily.

It is found in the membrane. The polypeptide is Major facilitator superfamily domain-containing protein 3 (Mfsd3) (Rattus norvegicus (Rat)).